The following is a 311-amino-acid chain: HPr kinase/phosphorylase (311 aa).

Residues His140 and Lys161 contribute to the active site. An ATP-binding site is contributed by 155 to 162; it reads GDSGIGKS. Residue Ser162 coordinates Mg(2+). The Proton acceptor; for phosphorylation activity. Proton donor; for dephosphorylation activity role is filled by Asp179. The segment at 203 to 212 is important for the catalytic mechanism of both phosphorylation and dephosphorylation; that stretch reads IEIRGIGIID. Mg(2+) is bound at residue Glu204. The active site involves Arg245. Residues 266–271 form an important for the catalytic mechanism of dephosphorylation region; that stretch reads PVKTGR.

The protein belongs to the HPrK/P family. Homohexamer. The cofactor is Mg(2+).

It catalyses the reaction [HPr protein]-L-serine + ATP = [HPr protein]-O-phospho-L-serine + ADP + H(+). The enzyme catalyses [HPr protein]-O-phospho-L-serine + phosphate + H(+) = [HPr protein]-L-serine + diphosphate. Its function is as follows. Catalyzes the ATP- as well as the pyrophosphate-dependent phosphorylation of a specific serine residue in HPr, a phosphocarrier protein of the phosphoenolpyruvate-dependent sugar phosphotransferase system (PTS). HprK/P also catalyzes the pyrophosphate-producing, inorganic phosphate-dependent dephosphorylation (phosphorolysis) of seryl-phosphorylated HPr (P-Ser-HPr). The two antagonistic activities of HprK/P are regulated by several intracellular metabolites, which change their concentration in response to the absence or presence of rapidly metabolisable carbon sources (glucose, fructose, etc.) in the growth medium. Therefore, by controlling the phosphorylation state of HPr, HPrK/P is a sensor enzyme that plays a major role in the regulation of carbon metabolism and sugar transport: it mediates carbon catabolite repression (CCR), and regulates PTS-catalyzed carbohydrate uptake and inducer exclusion. This Enterococcus faecalis (strain ATCC 700802 / V583) protein is HPr kinase/phosphorylase (hprK).